We begin with the raw amino-acid sequence, 140 residues long: MAIERTFSILKPDVTRRNLTGAVNALIEKAGLRIIAQKRVLITKAQAETFYAVHSARPFFGELVESMISGPVVVQVLEGEDAIKKYREVLGATDPAKADAGTIRKEFALSVGENSAHGSDAPETAAVEIAQWFAGNELVG.

Residues lysine 11, phenylalanine 59, arginine 87, threonine 93, arginine 104, and asparagine 114 each contribute to the ATP site. Histidine 117 serves as the catalytic Pros-phosphohistidine intermediate.

It belongs to the NDK family. In terms of assembly, homotetramer. Mg(2+) serves as cofactor.

It is found in the cytoplasm. The enzyme catalyses a 2'-deoxyribonucleoside 5'-diphosphate + ATP = a 2'-deoxyribonucleoside 5'-triphosphate + ADP. It carries out the reaction a ribonucleoside 5'-diphosphate + ATP = a ribonucleoside 5'-triphosphate + ADP. In terms of biological role, major role in the synthesis of nucleoside triphosphates other than ATP. The ATP gamma phosphate is transferred to the NDP beta phosphate via a ping-pong mechanism, using a phosphorylated active-site intermediate. This Beijerinckia indica subsp. indica (strain ATCC 9039 / DSM 1715 / NCIMB 8712) protein is Nucleoside diphosphate kinase.